We begin with the raw amino-acid sequence, 232 residues long: Ribose-5-phosphate isomerase A (232 aa).

Substrate-binding positions include 31 to 34 (TGST), 87 to 90 (DGAD), and 100 to 103 (KGGG). Glutamate 109 acts as the Proton acceptor in catalysis. Position 127 (lysine 127) interacts with substrate.

Belongs to the ribose 5-phosphate isomerase family. As to quaternary structure, homodimer.

It catalyses the reaction aldehydo-D-ribose 5-phosphate = D-ribulose 5-phosphate. The protein operates within carbohydrate degradation; pentose phosphate pathway; D-ribose 5-phosphate from D-ribulose 5-phosphate (non-oxidative stage): step 1/1. Its function is as follows. Catalyzes the reversible conversion of ribose-5-phosphate to ribulose 5-phosphate. This is Ribose-5-phosphate isomerase A from Bifidobacterium longum (strain DJO10A).